The chain runs to 393 residues: MGGAAARLGAVILFVVIVGLHGVRGKYALADASLKMADPNRFRGKDLPVLDQLTDPPGVRRVYHIQAGLPNPFQPPSLPITVYRRVERACRSVLLNAPSEAPQIVRGASEDVRKQPYNLTIAWFRMGGNCAIPITVMEYTECSYNKSLGACPIRTQPRWNYYDSFSAVSEDNLGFLMHAPAFETAGTYLRLVKINDWTEITQFILEHRAKGSCKYTLPLRIPPSACLSPQAYQQGVTVDSIGMLPRFIPENQRTVAVYSLKIAGWHGPRAPYTSTLLPPELPETPNATQPELAPEDPEDSALLEDPVGTVAPQIPPNWHIPSIQDAATPYHPPATPNNMGLIAGAVGGSLLAALVICGIVYWMRRRTRKAPKRIRLPHIREDDQPSSHQPLFY.

The signal sequence occupies residues 1–25 (MGGAAARLGAVILFVVIVGLHGVRG). The interval 25–57 (GKYALADASLKMADPNRFRGKDLPVLDQLTDPP) is interaction with TNFRSF14. Residues 26–338 (KYALADASLK…PYHPPATPNN (313 aa)) are Virion surface-facing. His-64 is a binding site for Zn(2+). Disulfide bonds link Cys-90/Cys-213, Cys-130/Cys-226, and Cys-142/Cys-151. Residues Asn-118 and Asn-145 are each glycosylated (N-linked (GlcNAc...) asparagine; by host). Asp-239 contributes to the Zn(2+) binding site. Residues 260-304 (LKIAGWHGPRAPYTSTLLPPELPETPNATQPELAPEDPEDSALLE) form a profusion region. A disordered region spans residues 273–300 (TSTLLPPELPETPNATQPELAPEDPEDS). An N-linked (GlcNAc...) asparagine; by host glycan is attached at Asn-286. A helical membrane pass occupies residues 339–363 (MGLIAGAVGGSLLAALVICGIVYWM). Over 364 to 393 (RRRTRKAPKRIRLPHIREDDQPSSHQPLFY) the chain is Intravirion.

The protein belongs to the herpesviridae glycoprotein D family. Homodimer. Interacts with host receptor TNFRSF14. Interacts with host receptor NECTIN1. Interacts (via profusion domain) with gB; this interaction occurs in the absence of gH/gL. Interacts (via profusion domain) with gH/gL heterodimer; this interaction occurs in the absence of gB. Associates with the gB-gH/gL-gD complex. Interacts (via C-terminus) with UL11 tegument protein. Interacts with host RSAD2.

Its subcellular location is the virion membrane. It localises to the host Golgi apparatus. Its function is as follows. Envelope glycoprotein that binds to the host cell entry receptors NECTIN1, TNFRSF14/HVEM and 3-O-sulfated heparan sulfate, promoting the virus entry into host cells. May trigger fusion with host membrane, by recruiting the fusion machinery composed of gB and gH/gL. The protein is Envelope glycoprotein D (gD) of Homo sapiens (Human).